A 688-amino-acid chain; its full sequence is ATP-dependent RNA helicase ded1 (688 aa).

2 stretches are compositionally biased toward polar residues: residues 1 to 15 (MADQLSSGMGNLSID) and 55 to 67 (GLNNSAWAGNNNY). Residues 1–170 (MADQLSSGMG…TPDDPSKQHT (170 aa)) form a disordered region. Residues 88–102 (GFEGQQGAGWGGPRP) show a composition bias toward gly residues. A compositionally biased stretch (low complexity) spans 103–114 (QGGFNPNAYRGN). The segment covering 115-129 (AGAGAGAGAGGGGGS) has biased composition (gly residues). Residues 194–222 (LTFSNPPLDNHLISNIQLARYNVPTPVQK) carry the Q motif motif. The Helicase ATP-binding domain maps to 225–416 (IPIVMGGRDL…RDFLKDYIFL (192 aa)). An ATP-binding site is contributed by 238-245 (AQTGSGKT). A DEAD box motif is present at residues 360-363 (DEAD). The 161-residue stretch at 427-587 (NITQKVEYVE…EVPAFLETIA (161 aa)) folds into the Helicase C-terminal domain. The interval 590–615 (SSFGGGRGGRGGGRGGGRGRTQTADY) is disordered. The span at 592–608 (FGGGRGGRGGGRGGGRG) shows a compositional bias: gly residues.

This sequence belongs to the DEAD box helicase family. DDX3/DED1 subfamily.

It localises to the cytoplasm. The catalysed reaction is ATP + H2O = ADP + phosphate + H(+). Its function is as follows. ATP-binding RNA helicase involved in translation initiation. Remodels RNA in response to ADP and ATP concentrations by facilitating disruption, but also formation of RNA duplexes. The chain is ATP-dependent RNA helicase ded1 (drh-9) from Neurospora crassa (strain ATCC 24698 / 74-OR23-1A / CBS 708.71 / DSM 1257 / FGSC 987).